Consider the following 116-residue polypeptide: Large ribosomal subunit protein bL19 (116 aa).

The protein belongs to the bacterial ribosomal protein bL19 family.

Functionally, this protein is located at the 30S-50S ribosomal subunit interface and may play a role in the structure and function of the aminoacyl-tRNA binding site. This chain is Large ribosomal subunit protein bL19, found in Haemophilus ducreyi (strain 35000HP / ATCC 700724).